Consider the following 379-residue polypeptide: RIB43A-like with coiled-coils protein 1 (379 aa).

Positions 1 to 21 (MYNIKQSTDTKEAAAIEARRN) are disordered. Residues 8–21 (TDTKEAAAIEARRN) show a composition bias toward basic and acidic residues. 2 coiled-coil regions span residues 82–111 (KEEA…GREF) and 216–304 (NANK…QAEK).

This sequence belongs to the RIB43A family. In terms of assembly, microtubule inner protein component of sperm flagellar doublet microtubules.

It localises to the cytoplasm. The protein localises to the cytoskeleton. Its subcellular location is the flagellum axoneme. This Homo sapiens (Human) protein is RIB43A-like with coiled-coils protein 1 (RIBC1).